Consider the following 126-residue polypeptide: Phosphoribosyl-AMP cyclohydrolase (126 aa).

Residue D76 coordinates Mg(2+). C77 is a binding site for Zn(2+). D78 and D80 together coordinate Mg(2+). Residues C94 and C101 each contribute to the Zn(2+) site.

It belongs to the PRA-CH family. As to quaternary structure, homodimer. Mg(2+) serves as cofactor. Requires Zn(2+) as cofactor.

The protein resides in the cytoplasm. It catalyses the reaction 1-(5-phospho-beta-D-ribosyl)-5'-AMP + H2O = 1-(5-phospho-beta-D-ribosyl)-5-[(5-phospho-beta-D-ribosylamino)methylideneamino]imidazole-4-carboxamide. It functions in the pathway amino-acid biosynthesis; L-histidine biosynthesis; L-histidine from 5-phospho-alpha-D-ribose 1-diphosphate: step 3/9. Its function is as follows. Catalyzes the hydrolysis of the adenine ring of phosphoribosyl-AMP. This chain is Phosphoribosyl-AMP cyclohydrolase, found in Vesicomyosocius okutanii subsp. Calyptogena okutanii (strain HA).